We begin with the raw amino-acid sequence, 239 residues long: Increased recombination centers protein 22-2 (239 aa).

Residues 1-19 (MKLSTIFTAFAATIATVAG) form the signal peptide. Topologically, residues 20-161 (YETTGSKQTV…AAVSFFDPRL (142 aa)) are lumenal. A helical transmembrane segment spans residues 162–182 (IFLELVLLITFAGLIYVGYEI). Over 183–239 (WGKQYFKGVAPVKAKKVSAAKASSPVATGPSTTSATGYDTNWIPESHLKQKKTKKVN) the chain is Cytoplasmic. The tract at residues 202–222 (AKASSPVATGPSTTSATGYDT) is disordered. Polar residues predominate over residues 211 to 221 (GPSTTSATGYD).

This sequence belongs to the IRC22 family.

It is found in the endoplasmic reticulum membrane. Is probably involved in a pathway contributing to genomic integrity. The sequence is that of Increased recombination centers protein 22-2 (IRC22-2) from Candida albicans (strain SC5314 / ATCC MYA-2876) (Yeast).